Consider the following 170-residue polypeptide: Peptide deformylase (170 aa).

Positions 91 and 133 each coordinate Fe cation. The active site involves glutamate 134. Histidine 137 provides a ligand contact to Fe cation.

The protein belongs to the polypeptide deformylase family. Fe(2+) serves as cofactor.

It catalyses the reaction N-terminal N-formyl-L-methionyl-[peptide] + H2O = N-terminal L-methionyl-[peptide] + formate. Removes the formyl group from the N-terminal Met of newly synthesized proteins. Requires at least a dipeptide for an efficient rate of reaction. N-terminal L-methionine is a prerequisite for activity but the enzyme has broad specificity at other positions. This is Peptide deformylase from Pectobacterium carotovorum subsp. carotovorum (strain PC1).